A 338-amino-acid polypeptide reads, in one-letter code: Flap endonuclease 1 (338 aa).

The interval 1–98 (MGTDIGDLLQ…ETLNRRKEVR (98 aa)) is N-domain. 7 residues coordinate Mg(2+): Asp27, Asp80, Glu152, Glu154, Asp173, Asp175, and Asp236. Positions 116–257 (AAYKYAQASS…TALKLIKKHG (142 aa)) are I-domain. An interaction with PCNA region spans residues 330-338 (RQQTLDQWF).

The protein belongs to the XPG/RAD2 endonuclease family. FEN1 subfamily. As to quaternary structure, interacts with PCNA. PCNA stimulates the nuclease activity without altering cleavage specificity. Mg(2+) serves as cofactor.

Structure-specific nuclease with 5'-flap endonuclease and 5'-3' exonuclease activities involved in DNA replication and repair. During DNA replication, cleaves the 5'-overhanging flap structure that is generated by displacement synthesis when DNA polymerase encounters the 5'-end of a downstream Okazaki fragment. Binds the unpaired 3'-DNA end and kinks the DNA to facilitate 5' cleavage specificity. Cleaves one nucleotide into the double-stranded DNA from the junction in flap DNA, leaving a nick for ligation. Also involved in the base excision repair (BER) pathway. Acts as a genome stabilization factor that prevents flaps from equilibrating into structures that lead to duplications and deletions. Also possesses 5'-3' exonuclease activity on nicked or gapped double-stranded DNA. In Methanosarcina barkeri (strain Fusaro / DSM 804), this protein is Flap endonuclease 1.